Here is a 133-residue protein sequence, read N- to C-terminus: Small ribosomal subunit protein bS6 (133 aa).

Belongs to the bacterial ribosomal protein bS6 family.

Binds together with bS18 to 16S ribosomal RNA. In Chlorobium limicola (strain DSM 245 / NBRC 103803 / 6330), this protein is Small ribosomal subunit protein bS6.